The following is a 725-amino-acid chain: Polyribonucleotide nucleotidyltransferase (725 aa).

Mg(2+)-binding residues include Asp506 and Asp512. A KH domain is found at 571–631 (PLIEQFAIDP…QNIIDACEHI (61 aa)). Residues 657–724 (DEVVIGKVER…KKDRIELSSA (68 aa)) enclose the S1 motif domain.

This sequence belongs to the polyribonucleotide nucleotidyltransferase family. Mg(2+) serves as cofactor.

Its subcellular location is the cytoplasm. It catalyses the reaction RNA(n+1) + phosphate = RNA(n) + a ribonucleoside 5'-diphosphate. Involved in mRNA degradation. Catalyzes the phosphorolysis of single-stranded polyribonucleotides processively in the 3'- to 5'-direction. The chain is Polyribonucleotide nucleotidyltransferase from Aliarcobacter butzleri (strain RM4018) (Arcobacter butzleri).